Consider the following 66-residue polypeptide: Large ribosomal subunit protein bL33c (66 aa).

The protein belongs to the bacterial ribosomal protein bL33 family.

The protein resides in the plastid. Its subcellular location is the chloroplast. The polypeptide is Large ribosomal subunit protein bL33c (Solanum bulbocastanum (Wild potato)).